The sequence spans 514 residues: MARPWLSASVLITAVILLVDYLNYYRLRKRLGGIPVVGDASYFWRRIRWTESDTNFQKVIQHGYDTFSKKAKPFAFWGQHEDFILVLPPGSCEEVKHLGPEKLNFLQAVEDSYHFKLHTNILGRSHVDAVRQSVNKNMNQLHEIVVKKAEETIPKLFDDIAASNEPFAAFLTIWHLVHIVSASYLVGTEFCANEEYLQAIEYYCINVPNFIYGYFWVPVPLRRLYWYLSPQGYKVRACKAKLKTFIVPKIRETISAWQNGQKSSSYTLLGAMLDLKAQKGQIKRDPTAMTKAELERQIDIFSDEMIFTGFDSAGPVACMVTQLLFEALRDKDLTKALRQELKSALEANNGQWNVQAMNLTPKLDSFTRESLRVNGPTLLSVTRTVMEPMQLKSGLSLQSGSIISSPSWLIHNDEDNYENAHQFDPYRFYNPSTNAVTTKVTTASTNFLGYGYGTQMCPGRHLGIKMSQILFSKLLMRYDGEFADAKAGKPANIVTSGQVLPPYYAKVILKRRGI.

Residues 5-25 (WLSASVLITAVILLVDYLNYY) form a helical membrane-spanning segment. Residue C457 coordinates heme.

The protein belongs to the cytochrome P450 family. Heme is required as a cofactor.

The protein localises to the membrane. The protein operates within mycotoxin biosynthesis. In terms of biological role, cytochrome P450 monooxygenase; part of the gene cluster that mediates the biosynthesis of 11'-deoxyverticillin A, one of the dimeric epipolythiodioxopiperazines (ETPs) from the verticillin family that act as mycotoxins. 11'-deoxyverticillin A is required for normal conidiation. The nonribosomal peptide synthetase verP is speculated to be responsible for condensation of amino acids to form the carbon skeleton of verticillin, whereas the cluster-specific tailoring enzymes are involved in further modifications leading to the production of 11'-deoxyverticillin A. This Clonostachys rogersoniana protein is Cytochrome P450 monooxygenase verB.